The chain runs to 295 residues: Trehalose/maltose transport system permease protein MalF (295 aa).

Transmembrane regions (helical) follow at residues Leu16–Val36, Val79–Ile99, Ala112–Met132, Ile146–Val166, Ile210–Ala230, Ile236–Ala256, and Ile267–Leu287. The region spanning Thr75–Tyr286 is the ABC transmembrane type-1 domain.

It belongs to the binding-protein-dependent transport system permease family. As to quaternary structure, the complex is composed of two ATP-binding proteins (MalK), two transmembrane proteins (MalG and MalF) and a solute-binding protein (MalE).

Its subcellular location is the cell membrane. Part of the ABC transporter complex MalEFGK involved in trehalose/maltose import. Responsible for the translocation of the substrate across the membrane. In Thermococcus litoralis (strain ATCC 51850 / DSM 5473 / JCM 8560 / NS-C), this protein is Trehalose/maltose transport system permease protein MalF (malF).